The chain runs to 294 residues: MSHNDKNTHNYQISSLDKIINDSSVAIEFENVYFAYTEERMILKNVSFTINDNEYVCVIGHNGSGKSTISKVLTGLLKPKSGVIKLFGIEISAANLKYLRNNIGIVFQNPDNQFVGITAEDDIAFGLENRKVPPNKMWDIINDAAVATGIEDLLKKESLELSGGQKQRVAIASVLAINPKVIIFDESTSMLDPKGKNELKELMVSLRDVAKKTIISITHDMEEVVKADKVIVMSNGEVQYIGTPQEIFANEERLLKMQLDIPFTLKLAKTLKEKGLKIDLTLNNEELIEKICKN.

The ABC transporter domain maps to 27-260; the sequence is IEFENVYFAY…EERLLKMQLD (234 aa). 60-67 provides a ligand contact to ATP; that stretch reads GHNGSGKS.

This sequence belongs to the ABC transporter superfamily. Energy-coupling factor EcfA family. As to quaternary structure, forms a stable energy-coupling factor (ECF) transporter complex composed of 2 membrane-embedded substrate-binding proteins (S component), 2 ATP-binding proteins (A component) and 2 transmembrane proteins (T component).

It localises to the cell membrane. Its function is as follows. ATP-binding (A) component of a common energy-coupling factor (ECF) ABC-transporter complex. Unlike classic ABC transporters this ECF transporter provides the energy necessary to transport a number of different substrates. This Ureaplasma parvum serovar 3 (strain ATCC 700970) protein is Energy-coupling factor transporter ATP-binding protein EcfA1.